We begin with the raw amino-acid sequence, 87 residues long: Small ribosomal subunit protein bS16 (87 aa).

The protein belongs to the bacterial ribosomal protein bS16 family.

In Nitrosospira multiformis (strain ATCC 25196 / NCIMB 11849 / C 71), this protein is Small ribosomal subunit protein bS16.